A 339-amino-acid chain; its full sequence is MRSYRFSDYLHMSVSFSNDMDLFCGEDSGVFSGESTVDFSSSEVDSWPGDSIACFIEDERHFVPGHDYLSRFQTRSLDASAREDSVAWILKVQAYYNFQPLTAYLAVNYMDRFLYARRLPETSGWPMQLLAVACLSLAAKMEEILVPSLFDFQVAGVKYLFEAKTIKRMELLVLSVLDWRLRSVTPFDFISFFAYKIDPSGTFLGFFISHATEIILSNIKEASFLEYWPSSIAAAAILCVANELPSLSSVVNPHESPETWCDGLSKEKIVRCYRLMKAMAIENNRLNTPKVIAKLRVSVRASSTLTRPSDESSFSSSSPCKRRKLSGYSWVGDETSTSN.

Belongs to the cyclin family. Cyclin D subfamily. In terms of assembly, interacts with CDKA-1 and KRP6/ICK4. In terms of tissue distribution, expressed in roots, leaves and flowers.

May activate cell cycle in the root apical meristem (RAM) and promote embryonic root (radicle) protrusion. This chain is Cyclin-D1-1 (CYCD1-1), found in Arabidopsis thaliana (Mouse-ear cress).